We begin with the raw amino-acid sequence, 221 residues long: Putative transmembrane protein ORF25 (221 aa).

An N-terminal signal peptide occupies residues Met1 to Ser23. Residues Asn19 and Asn179 are each glycosylated (N-linked (GlcNAc...) asparagine; by host). Residues Gln24–Ser191 are Extracellular-facing. Residues Val192–Ile212 form a helical membrane-spanning segment. The Cytoplasmic segment spans residues Ala213–His221.

It localises to the host membrane. The protein is Putative transmembrane protein ORF25 of Ostreid herpesvirus 1 (isolate France) (OsHV-1).